Here is a 240-residue protein sequence, read N- to C-terminus: UDP-2,3-diacylglucosamine hydrolase (240 aa).

Mn(2+)-binding residues include D8, H10, D41, N79, and H114. A substrate-binding site is contributed by 79 to 80 (NR). D122, S160, N164, K167, and H195 together coordinate substrate. H195 and H197 together coordinate Mn(2+).

This sequence belongs to the LpxH family. Mn(2+) serves as cofactor.

It localises to the cell inner membrane. The catalysed reaction is UDP-2-N,3-O-bis[(3R)-3-hydroxytetradecanoyl]-alpha-D-glucosamine + H2O = 2-N,3-O-bis[(3R)-3-hydroxytetradecanoyl]-alpha-D-glucosaminyl 1-phosphate + UMP + 2 H(+). It participates in glycolipid biosynthesis; lipid IV(A) biosynthesis; lipid IV(A) from (3R)-3-hydroxytetradecanoyl-[acyl-carrier-protein] and UDP-N-acetyl-alpha-D-glucosamine: step 4/6. In terms of biological role, hydrolyzes the pyrophosphate bond of UDP-2,3-diacylglucosamine to yield 2,3-diacylglucosamine 1-phosphate (lipid X) and UMP by catalyzing the attack of water at the alpha-P atom. Involved in the biosynthesis of lipid A, a phosphorylated glycolipid that anchors the lipopolysaccharide to the outer membrane of the cell. The chain is UDP-2,3-diacylglucosamine hydrolase from Shigella sonnei (strain Ss046).